Reading from the N-terminus, the 668-residue chain is Metastasis-associated protein MTA2 (668 aa).

The 144-residue stretch at 1-144 (MAANMYRVGD…PVQKTLLADQ (144 aa)) folds into the BAH domain. Ser52 and Ser54 each carry phosphoserine. The ELM2 domain maps to 145-256 (GEIRVGCKFQ…KAMSTLVPQG (112 aa)). Lys152 carries the post-translational modification N6-acetyllysine. The 53-residue stretch at 263–315 (DEMEEWSASEAMLFEEALEKYGKDFNDIRQDFLPWKSLASIVQFYYMWKTTDR) folds into the SANT domain. A GATA-type; atypical zinc finger spans residues 367–394 (CESCHTTQSAQWYAWGPPNMQCRLCASC). The segment at 412–437 (GAARGTTEPHSRGHLSRPEAQSLSPY) is disordered. 2 positions are modified to phosphoserine: Ser433 and Ser435. N6-acetyllysine is present on Lys460. Lys492 is covalently cross-linked (Glycyl lysine isopeptide (Lys-Gly) (interchain with G-Cter in SUMO2 and SUMO3); alternate). Residue Lys492 forms a Glycyl lysine isopeptide (Lys-Gly) (interchain with G-Cter in SUMO2); alternate linkage. Lys508 participates in a covalent cross-link: Glycyl lysine isopeptide (Lys-Gly) (interchain with G-Cter in SUMO2). Lys522 and Lys531 each carry N6-acetyllysine. At Thr534 the chain carries Phosphothreonine. Residues Lys559 and Lys595 each participate in a glycyl lysine isopeptide (Lys-Gly) (interchain with G-Cter in SUMO2) cross-link. 2 disordered regions span residues 580-599 (ASGI…LNPA) and 647-668 (PPVP…VLED).

The protein belongs to the metastasis-associated protein family. Component of the nucleosome remodeling and deacetylase (NuRD) repressor complex, composed of core proteins MTA1, MTA2, MTA3, RBBP4, RBBP7, HDAC1, HDAC2, MBD2, MBD3, and peripherally associated proteins CDK2AP1, CDK2AP2, GATAD2A, GATAD2B, CHD3, CHD4 and CHD5. The exact stoichiometry of the NuRD complex is unknown, and some subunits such as MBD2 and MBD3, GATAD2A and GATAD2B, and CHD3, CHD4 and CHD5 define mutually exclusive NuRD complexes. Interacts with CHD3. Interacts with CHD4. Interacts with GATAD2A. Interacts with HDAC7. Interacts with MBD3. Interacts with p53/TP53. Interacts with MINT. Interacts with PIMREG. Interacts with NACC2. Interacts with ERCC6. Interacts with PWWP2B. Interacts with transcription factor BCL11A.

The protein resides in the nucleus. Functionally, may function as a transcriptional coregulator. Acts as a component of the histone deacetylase NuRD complex which participates in the remodeling of chromatin. The sequence is that of Metastasis-associated protein MTA2 (Mta2) from Mus musculus (Mouse).